Reading from the N-terminus, the 383-residue chain is NAD(P) transhydrogenase subunit alpha part 1 (383 aa).

NAD(+) is bound by residues 131-134 (QNMD), Val181, 201-203 (DVR), and Gly231.

It belongs to the AlaDH/PNT family. As to quaternary structure, heterotrimer of two alpha chains and a beta (PntB) chain; in Rickettsia, the alpha chain is made of two subunits (PntAA and PntAB) and forms a dimer.

The catalysed reaction is NAD(+) + NADPH + H(+)(in) = NADH + NADP(+) + H(+)(out). In terms of biological role, the transhydrogenation between NADH and NADP is coupled to respiration and ATP hydrolysis and functions as a proton pump across the membrane. The chain is NAD(P) transhydrogenase subunit alpha part 1 (pntAA) from Rickettsia prowazekii (strain Madrid E).